Consider the following 446-residue polypeptide: Adenylosuccinate synthetase (446 aa).

Residues 21-27 (GDEGKGK) and 49-51 (GHT) each bind GTP. Aspartate 22 (proton acceptor) is an active-site residue. Residues aspartate 22 and glycine 49 each coordinate Mg(2+). IMP contacts are provided by residues 22 to 25 (DEGK), 47 to 50 (NAGH), threonine 141, arginine 155, glutamine 236, threonine 251, and arginine 319. Histidine 50 functions as the Proton donor in the catalytic mechanism. Substrate is bound at residue 315 to 321 (VTTGRSR). GTP is bound by residues arginine 321, 347–349 (KLD), and 429–431 (STS).

It belongs to the adenylosuccinate synthetase family. Homodimer. It depends on Mg(2+) as a cofactor.

It localises to the cytoplasm. The enzyme catalyses IMP + L-aspartate + GTP = N(6)-(1,2-dicarboxyethyl)-AMP + GDP + phosphate + 2 H(+). It participates in purine metabolism; AMP biosynthesis via de novo pathway; AMP from IMP: step 1/2. In terms of biological role, plays an important role in the de novo pathway of purine nucleotide biosynthesis. Catalyzes the first committed step in the biosynthesis of AMP from IMP. The chain is Adenylosuccinate synthetase from Polaromonas sp. (strain JS666 / ATCC BAA-500).